A 154-amino-acid polypeptide reads, in one-letter code: SsrA-binding protein (154 aa).

Belongs to the SmpB family.

The protein localises to the cytoplasm. Functionally, required for rescue of stalled ribosomes mediated by trans-translation. Binds to transfer-messenger RNA (tmRNA), required for stable association of tmRNA with ribosomes. tmRNA and SmpB together mimic tRNA shape, replacing the anticodon stem-loop with SmpB. tmRNA is encoded by the ssrA gene; the 2 termini fold to resemble tRNA(Ala) and it encodes a 'tag peptide', a short internal open reading frame. During trans-translation Ala-aminoacylated tmRNA acts like a tRNA, entering the A-site of stalled ribosomes, displacing the stalled mRNA. The ribosome then switches to translate the ORF on the tmRNA; the nascent peptide is terminated with the 'tag peptide' encoded by the tmRNA and targeted for degradation. The ribosome is freed to recommence translation, which seems to be the essential function of trans-translation. The polypeptide is SsrA-binding protein (Solidesulfovibrio magneticus (strain ATCC 700980 / DSM 13731 / RS-1) (Desulfovibrio magneticus)).